We begin with the raw amino-acid sequence, 95 residues long: Beta-defensin 132 (95 aa).

An N-terminal signal peptide occupies residues M1–A22. 3 disulfide bridges follow: C27-C55, C35-C49, and C39-C56. Positions H74–S95 are disordered. Positions Q76–K87 are enriched in basic residues.

Belongs to the beta-defensin family.

Its subcellular location is the secreted. Functionally, has antibacterial activity. This Homo sapiens (Human) protein is Beta-defensin 132 (DEFB132).